The following is a 308-amino-acid chain: Mycothiol acetyltransferase (308 aa).

N-acetyltransferase domains lie at 8–155 (RDVD…PRLR) and 160–308 (VQVR…RRAR). 1D-myo-inositol 2-(L-cysteinylamino)-2-deoxy-alpha-D-glucopyranoside is bound at residue glutamate 39. Residue 84–86 (LVV) participates in acetyl-CoA binding. Residues glutamate 187, lysine 226, and glutamate 240 each contribute to the 1D-myo-inositol 2-(L-cysteinylamino)-2-deoxy-alpha-D-glucopyranoside site. Acetyl-CoA is bound by residues 244 to 246 (LGI) and 251 to 257 (QGLGLGR). Tyrosine 278 lines the 1D-myo-inositol 2-(L-cysteinylamino)-2-deoxy-alpha-D-glucopyranoside pocket.

The protein belongs to the acetyltransferase family. MshD subfamily. Monomer.

The catalysed reaction is 1D-myo-inositol 2-(L-cysteinylamino)-2-deoxy-alpha-D-glucopyranoside + acetyl-CoA = mycothiol + CoA + H(+). In terms of biological role, catalyzes the transfer of acetyl from acetyl-CoA to desacetylmycothiol (Cys-GlcN-Ins) to form mycothiol. The sequence is that of Mycothiol acetyltransferase from Geodermatophilus obscurus (strain ATCC 25078 / DSM 43160 / JCM 3152 / CCUG 61914 / KCC A-0152 / KCTC 9177 / NBRC 13315 / NRRL B-3577 / G-20).